The chain runs to 455 residues: UDP-N-acetylmuramoylalanine--D-glutamate ligase (455 aa).

120–126 is an ATP binding site; sequence GSNGKTT.

The protein belongs to the MurCDEF family.

It localises to the cytoplasm. The catalysed reaction is UDP-N-acetyl-alpha-D-muramoyl-L-alanine + D-glutamate + ATP = UDP-N-acetyl-alpha-D-muramoyl-L-alanyl-D-glutamate + ADP + phosphate + H(+). The protein operates within cell wall biogenesis; peptidoglycan biosynthesis. Its function is as follows. Cell wall formation. Catalyzes the addition of glutamate to the nucleotide precursor UDP-N-acetylmuramoyl-L-alanine (UMA). The protein is UDP-N-acetylmuramoylalanine--D-glutamate ligase of Pediococcus pentosaceus (strain ATCC 25745 / CCUG 21536 / LMG 10740 / 183-1w).